A 3790-amino-acid chain; its full sequence is Transcription-associated protein 1 (3790 aa).

6 HEAT repeats span residues 98–136, 335–381, 740–778, 1185–1223, 1332–1370, and 1826–1864; these read RQHV…HFRP, TDLR…HVRQ, DLLY…ELCL, AKAT…IQSK, IGYK…GVTL, and AIHK…AMPL. Residues 2610–3173 enclose the FAT domain; sequence LLAYLGKSHN…YFPIRTLYLT (564 aa). The PI3K/PI4K catalytic domain maps to 3429-3753; that stretch reads MPRVEIVQKN…AVDIIMTRFN (325 aa). The tract at residues 3435–3441 is G-loop; that stretch reads VQKNNTA. The interval 3616–3624 is catalytic loop; the sequence is NLTRLNADM. The interval 3636–3661 is activation loop; that stretch reads ISYFKFDVNDDKCQLNQHRPVPFRLT. Residues 3758 to 3790 enclose the FATC domain; sequence FDSIENKKISVLVQSATNIDNLCRMDPAWHPWL.

It belongs to the PI3/PI4-kinase family. TRA1 subfamily. In terms of assembly, component of the Tip60 chromatin-remodeling complex which contains the catalytic subunit Tip60 and the subunits Domino, Tra1, Brd8, E(Pc), DMAP1, Pontin, Reptin, Ing3, Act87E, BAP55, Mrg15, MrgBP, Gas41 and YL-1. Probable component of some SAGA complex. Interacts with Spt3, Gcn5, Ada3 and Ada2b. Ubiquitous.

The protein localises to the nucleus. The protein resides in the cytoplasm. Its subcellular location is the chromosome. Functionally, part of the Tip60 chromatin-remodeling complex which is involved in DNA repair. Upon induction of DNA double-strand breaks, this complex acetylates phosphorylated H2AV in nucleosomes and exchanges it with unmodified H2AV. During wing development, required for activity of Notch and its coactivator mam. Function in promoting mam function is likely to involve both the Tip60 and SAGA complexes. The polypeptide is Transcription-associated protein 1 (Nipped-A) (Drosophila melanogaster (Fruit fly)).